The primary structure comprises 404 residues: Cysteine desulfurase IscS (404 aa).

Residues 75-76 (AT), asparagine 155, glutamine 183, and 203-205 (SAH) contribute to the pyridoxal 5'-phosphate site. At lysine 206 the chain carries N6-(pyridoxal phosphate)lysine. Residue threonine 243 participates in pyridoxal 5'-phosphate binding. Catalysis depends on cysteine 328, which acts as the Cysteine persulfide intermediate. Cysteine 328 contributes to the [2Fe-2S] cluster binding site.

Belongs to the class-V pyridoxal-phosphate-dependent aminotransferase family. NifS/IscS subfamily. In terms of assembly, homodimer. Forms a heterotetramer with IscU, interacts with other sulfur acceptors. Pyridoxal 5'-phosphate serves as cofactor.

The protein resides in the cytoplasm. It carries out the reaction (sulfur carrier)-H + L-cysteine = (sulfur carrier)-SH + L-alanine. Its pathway is cofactor biosynthesis; iron-sulfur cluster biosynthesis. Functionally, master enzyme that delivers sulfur to a number of partners involved in Fe-S cluster assembly, tRNA modification or cofactor biosynthesis. Catalyzes the removal of elemental sulfur atoms from cysteine to produce alanine. Functions as a sulfur delivery protein for Fe-S cluster synthesis onto IscU, an Fe-S scaffold assembly protein, as well as other S acceptor proteins. In Vibrio vulnificus (strain CMCP6), this protein is Cysteine desulfurase IscS.